The primary structure comprises 342 residues: tRNA dimethylallyltransferase (342 aa).

ATP is bound at residue 39-46 (GPTGSGKT). 41 to 46 (TGSGKT) contributes to the substrate binding site. Residues 64–67 (DSMQ) are interaction with substrate tRNA.

This sequence belongs to the IPP transferase family. In terms of assembly, monomer. It depends on Mg(2+) as a cofactor.

It carries out the reaction adenosine(37) in tRNA + dimethylallyl diphosphate = N(6)-dimethylallyladenosine(37) in tRNA + diphosphate. Functionally, catalyzes the transfer of a dimethylallyl group onto the adenine at position 37 in tRNAs that read codons beginning with uridine, leading to the formation of N6-(dimethylallyl)adenosine (i(6)A). This is tRNA dimethylallyltransferase from Chlamydia abortus (strain DSM 27085 / S26/3) (Chlamydophila abortus).